A 218-amino-acid chain; its full sequence is Copper acquisition factor BIM1 (218 aa).

Positions 1-19 are cleaved as a signal peptide; sequence MFALKSILVTSLITSTALA. 2 residues coordinate Cu(2+): His-20 and His-65. N-linked (GlcNAc...) asparagine glycans are attached at residues Asn-87, Asn-91, and Asn-124. Cu(2+) is bound at residue Asp-138. N-linked (GlcNAc...) asparagine glycans are attached at residues Asn-158 and Asn-170. Residues 160-194 form a disordered region; the sequence is TCTNDASKASNATSTSSGSATATSAAATSSSSGTS. Residues 165–194 show a composition bias toward low complexity; it reads ASKASNATSTSSGSATATSAAATSSSSGTS. The GPI-anchor amidated serine moiety is linked to residue Ser-190. Residues 191–218 constitute a propeptide, removed in mature form; the sequence is SGTSGAIKEVVGFGALSLALGIAGLIIL.

This sequence belongs to the X325 family. In terms of assembly, interacts with the CUF1-dependent copper transporter CTR1. Cu(2+) is required as a cofactor.

Its subcellular location is the cell membrane. In terms of biological role, lytic polysaccharide monooxygenase-like protein that has diverged to biological functions other than polysaccharide degradation since it does not perform oxidative cleavage of polysaccharides. Cell surface-bound protein that functions in the copper-accumulation pathway shared by the CUF1-dependent copper transporter CTR1. Involved in maintaining cell wall integrity during copper deficiency. Binds Cu(2+) with an estimated 1:1 stoichiometry and might serve as an extracellular copper ligand. FRE4 and FRE7 metalloreductases probably function together with CTR1 and BIM1 to liberate the Cu(2+) bound to the BIM1 copper-binding site for subsequent import of Cu(+) into the cell by CTR1, via the reduction of BIM1-bound Cu(2+) to Cu(+) to reduce binding affinity for BIM1 but increase affinity for CTR1. Facilitates copper acquisition in the brain of mammalian hosts and acts as a copper-dependent virulence trait in fungal meningitis. While BIM1 plays a critical role in cryptococcal meningitis, at least in part through its role in copper acquisition, it could play additional roles during copper limitation or as a means to invade and colonize host tissues in the brain, by compromising host carbohydrate integrity via its lytic polysaccharide monooxygenase (LPMO) activity, which has still to be determined. The chain is Copper acquisition factor BIM1 from Cryptococcus neoformans var. grubii serotype A (strain H99 / ATCC 208821 / CBS 10515 / FGSC 9487) (Filobasidiella neoformans var. grubii).